The primary structure comprises 484 residues: Serine/threonine-protein kinase RIO1 (484 aa).

Positions 76–402 (ADLNGCLSTG…EFDNADHECS (327 aa)) constitute a Protein kinase domain. Residues Lys125 and Leu198 each contribute to the ATP site. The active-site Proton acceptor is the Asp244. The Mg(2+) site is built by Asn249 and Asp261. The 4-aspartylphosphate intermediate role is filled by Asp261. Positions 398 to 484 (DHECSSGTEE…KLVKKTKSKK (87 aa)) are disordered. Ser402, Ser403, Ser409, Ser416, Ser417, and Ser419 each carry phosphoserine; by CK2. The segment at 403-484 (SGTEEFSDDE…KLVKKTKSKK (82 aa)) is interaction with CKA2. The span at 407–434 (EFSDDEEDGSSGSEEDDEEEGEYYDDDE) shows a compositional bias: acidic residues. The tract at residues 440–484 (GKKHEDKDLKKLRKQEAKDAKREKRKTKVKKHIKKKLVKKTKSKK) is association with (pre-)40S ribosomal subunit. Basic and acidic residues predominate over residues 442–461 (KHEDKDLKKLRKQEAKDAKR). The span at 462–484 (EKRKTKVKKHIKKKLVKKTKSKK) shows a compositional bias: basic residues.

This sequence belongs to the protein kinase superfamily. RIO-type Ser/Thr kinase family. Interacts with CKA2. Mg(2+) serves as cofactor. Autophosphorylated. Phosphorylated by casein kinase II (CK2). Phosphorylation by CK2 stimulates RIO1 kinase activity and targets it for degradation at the G1/S transition of the cell cycle.

The protein resides in the cytoplasm. It catalyses the reaction L-seryl-[protein] + ATP = O-phospho-L-seryl-[protein] + ADP + H(+). The enzyme catalyses L-threonyl-[protein] + ATP = O-phospho-L-threonyl-[protein] + ADP + H(+). The catalysed reaction is ATP + H2O = ADP + phosphate + H(+). Required for the final endonucleolytic cleavage at site D converting 20S pre-rRNA into the mature 18S rRNA. Required for the final steps of cytoplasmic maturation of the 40S ribosomal subunit. The association with the very late 40S subunit intermediate seems to follow RIO2 association with precursors of the 40S subunit and may involve a translation-like checkpoint point cycle preceeding the binding to the 60S ribosomal subunit. Despite the protein kinase domain is proposed to act predominantly as an ATPase. The catalytic activity regulates its dynamic association with the 40S subunit. Has a role in the cell cycle where it is required for entrance into S-phase and in the control of the onset of anaphase. Appears to also be involved in the maintenance of chromosome stability and correct mitotic segregation. In Saccharomyces cerevisiae (strain ATCC 204508 / S288c) (Baker's yeast), this protein is Serine/threonine-protein kinase RIO1 (RIO1).